The primary structure comprises 236 residues: MTEELYLKDSYIKEFEGRVVRIEGNYVILDKTAFYPGGGGLDNDTGFLVNEKGERISVTEVKRGENGEILHKIDQNGSLNVNEKVIGTIDWDRRYRMMRLHTASHIVAALAYRKFGALITGGHISPEQAKDDFNVENKDTLIELINEANEIIKKDIELKIYFLPREEALMIPAIVKLAGRNPPQIPIWRIVEIPGIDIQADGGPHVKNTKEIGEIVLLKVENKGKGRKRVYYTVKP.

The Zn(2+) site is built by H101, H105, and H205.

Belongs to the class-II aminoacyl-tRNA synthetase family. Editing domain AlaX-M subfamily. The cofactor is Zn(2+).

It is found in the cytoplasm. In terms of biological role, functions in trans to edit the amino acid moiety from incorrectly charged Ser-tRNA(Ala). The polypeptide is Alanyl-tRNA editing protein AlaX-M (alaXM) (Saccharolobus solfataricus (strain ATCC 35092 / DSM 1617 / JCM 11322 / P2) (Sulfolobus solfataricus)).